We begin with the raw amino-acid sequence, 212 residues long: FMN-dependent NADH:quinone oxidoreductase 1 (212 aa).

FMN is bound by residues serine 10, 16–18 (SHS), 97–100 (MYNF), and 145–148 (SRGG).

Belongs to the azoreductase type 1 family. Homodimer. FMN serves as cofactor.

The catalysed reaction is 2 a quinone + NADH + H(+) = 2 a 1,4-benzosemiquinone + NAD(+). It carries out the reaction N,N-dimethyl-1,4-phenylenediamine + anthranilate + 2 NAD(+) = 2-(4-dimethylaminophenyl)diazenylbenzoate + 2 NADH + 2 H(+). Its function is as follows. Quinone reductase that provides resistance to thiol-specific stress caused by electrophilic quinones. Also exhibits azoreductase activity. Catalyzes the reductive cleavage of the azo bond in aromatic azo compounds to the corresponding amines. The sequence is that of FMN-dependent NADH:quinone oxidoreductase 1 from Pseudomonas fluorescens (strain Pf0-1).